Reading from the N-terminus, the 848-residue chain is DNA-binding protein RFX6 (848 aa).

The RFX-type winged-helix DNA-binding region spans 56–131 (TLQWLEDNYI…YHYYGIGIKE (76 aa)).

This sequence belongs to the RFX family. As to expression, expressed in progenitors and hormone expressing cells of the islet lineage.

Its subcellular location is the nucleus. Transcription factor required to direct islet cell differentiation during endocrine pancreas development. The chain is DNA-binding protein RFX6 (rfx6) from Danio rerio (Zebrafish).